The primary structure comprises 862 residues: Leucine--tRNA ligase (862 aa).

The 'HIGH' region signature appears at 42-52 (PYPSGRLHMGH). The short motif at 622–626 (KMSKS) is the 'KMSKS' region element. Residue lysine 625 coordinates ATP.

Belongs to the class-I aminoacyl-tRNA synthetase family.

It localises to the cytoplasm. The enzyme catalyses tRNA(Leu) + L-leucine + ATP = L-leucyl-tRNA(Leu) + AMP + diphosphate. The sequence is that of Leucine--tRNA ligase from Vibrio campbellii (strain ATCC BAA-1116).